The chain runs to 620 residues: Protein regulator of cytokinesis 1 (620 aa).

The interval 1–303 (MRRSEVLAEE…IEAIRVELVQ (303 aa)) is required for the interaction with KIF4A. The interval 1 to 341 (MRRSEVLAEE…QLHDAEIVRL (341 aa)) is dimerization. Coiled coils occupy residues 96-133 (ILQLEKDLRTQVELMRKQKKERKQELKLLQEQDQELCE), 211-304 (SLEN…LVQY), and 383-463 (GNLL…TEML). The segment at 342–466 (KNYYEVHKEL…QTETEMLYGS (125 aa)) is spectrin-fold. Residues 446–459 (AKQERQLKNKKQTE) are compositionally biased toward basic and acidic residues. The segment at 446–488 (AKQERQLKNKKQTETEMLYGSAPRTPSKRRGLAPNTPGKARKL) is disordered. The interval 467–620 (APRTPSKRRG…GILNSTNIQS (154 aa)) is unstructured, Arg/Lys rich. Phosphothreonine; by CDK1 occurs at positions 470 and 481. Phosphoserine is present on residues Ser-513, Arg-541, and Ser-571. The segment at 517–545 (RLPPSGSKPVAASTCSGKKTPRTGRHGAN) is disordered. At Thr-578 the chain carries Phosphothreonine. Residues 600–620 (LSKASKSDATSGILNSTNIQS) form a disordered region. Polar residues predominate over residues 606 to 620 (SDATSGILNSTNIQS). A Phosphothreonine; by PLK1 modification is found at Thr-616.

The protein belongs to the MAP65/ASE1 family. In terms of assembly, homodimer. Interacts with the C-terminal Rho-GAP domain and the basic region of RACGAP1. The interaction with RACGAP1 inhibits its GAP activity towards CDC42 in vitro, which may be required for maintaining normal spindle morphology. Interacts (via N-terminus) with the C-terminus of CENPE (via C-terminus); the interaction occurs during late mitosis. Interacts (via N-terminus) with KIF4A (via C-terminus); the interaction is required for the progression of mitosis. Interacts (via N-terminus) with KIF23 (via C-terminus); the interaction occurs during late mitosis. Interacts with KIF14 and KIF20A. Interacts with PLK1. Interacts with KIF20B. Interacts with CCDC66. Phosphorylation by CDK1 in early mitosis holds PRC1 in an inactive monomeric state, during the metaphase to anaphase transition, PRC1 is dephosphorylated, promoting interaction with KIF4A, which then translocates PRC1 along mitotic spindles to the plus ends of antiparallel interdigitating microtubules. Dephosphorylation also promotes MT-bundling activity by allowing dimerization. Phosphorylation by CDK1 prevents PLK1-binding: upon degradation of CDK1 at anaphase and dephosphorylation, it is then phosphorylated by PLK1, leading to cytokinesis. In terms of tissue distribution, overexpressed in bladder cancer cells.

It is found in the nucleus. The protein localises to the cytoplasm. Its subcellular location is the cytoskeleton. It localises to the spindle pole. The protein resides in the midbody. It is found in the chromosome. Key regulator of cytokinesis that cross-links antiparrallel microtubules at an average distance of 35 nM. Essential for controlling the spatiotemporal formation of the midzone and successful cytokinesis. Required for KIF14 localization to the central spindle and midbody. Required to recruit PLK1 to the spindle. Stimulates PLK1 phosphorylation of RACGAP1 to allow recruitment of ECT2 to the central spindle. Acts as an oncogene for promoting bladder cancer cells proliferation, apoptosis inhibition and carcinogenic progression. In Homo sapiens (Human), this protein is Protein regulator of cytokinesis 1.